A 495-amino-acid chain; its full sequence is Cytochrome P450 monooxygenase BOA4 (495 aa).

Residues 12–31 (LANSNTVIAGCIVFALYYLF) traverse the membrane as a helical segment. Asparagine 115 carries N-linked (GlcNAc...) asparagine glycosylation. Cysteine 439 contacts heme.

The protein belongs to the cytochrome P450 family. The cofactor is heme.

Its subcellular location is the membrane. The protein operates within polyketide biosynthesis. Cytochrome P450 monooxygenase; part of the gene cluster A that mediates the biosynthesis of botcinic acid and its botcinin derivatives, acetate-derived polyketides that contribute to virulence when combined with the sesquiterpene botrydial. Botcinic acid and its derivatives have been shown to induce chlorosis and necrosis during host plant infection, but also have antifungal activities. Two polyketide synthases, BOA6 and BOA9, are involved in the biosynthesis of botcinins. BOA6 mediates the formation of the per-methylated tetraketide core by condensation of four units of malonyl-CoA with one unit of acetyl-CoA, which would be methylated in activated methylene groups to yield a bicyclic acid intermediate that could then either be converted to botrylactone derivatives or lose the starter acetate unit through a retro-Claisen type C-C bond cleavage to yield botcinin derivatives. The second polyketide synthase, BOA9, is probably required for the biosynthesis of the tetraketide side chain of botcinins. The methyltransferase (MT) domain within BOA6 is probably responsible for the incorporation of four methyl groups. The trans-enoyl reductase BOA5 might take over the enoyl reductase function of BOA6 that misses an ER domain. The monooxygenases BOA2, BOA3 and BOA4 might be involved in further hydroxylations at C4, C5 and C8, whereas BOA7, close to BOA9, could potentially be involved in the hydroxylation at C4 in the side chain of botcinins. The sequence is that of Cytochrome P450 monooxygenase BOA4 from Botryotinia fuckeliana (strain B05.10) (Noble rot fungus).